A 201-amino-acid chain; its full sequence is Probable GTP-binding protein EngB (201 aa).

The EngB-type G domain occupies 21–191; it reads AAPQIILAGR…WNLLDVTAIP (171 aa). GTP contacts are provided by residues 29–36, 56–60, 75–78, 142–145, and 168–172; these read GRSNVGKS, GKTRS, DLPG, TKSD, and ICVSS. Residues Ser36 and Thr58 each contribute to the Mg(2+) site.

Belongs to the TRAFAC class TrmE-Era-EngA-EngB-Septin-like GTPase superfamily. EngB GTPase family. Mg(2+) serves as cofactor.

Its function is as follows. Necessary for normal cell division and for the maintenance of normal septation. This chain is Probable GTP-binding protein EngB, found in Maridesulfovibrio salexigens (strain ATCC 14822 / DSM 2638 / NCIMB 8403 / VKM B-1763) (Desulfovibrio salexigens).